A 191-amino-acid chain; its full sequence is Ribonuclease HII (191 aa).

An RNase H type-2 domain is found at 16–191 (INLIGIDEAG…KLHRKSFKLL (176 aa)). The a divalent metal cation site is built by aspartate 22, glutamate 23, and aspartate 110.

The protein belongs to the RNase HII family. It depends on Mn(2+) as a cofactor. Mg(2+) serves as cofactor.

The protein localises to the cytoplasm. It carries out the reaction Endonucleolytic cleavage to 5'-phosphomonoester.. Functionally, endonuclease that specifically degrades the RNA of RNA-DNA hybrids. The sequence is that of Ribonuclease HII from Campylobacter jejuni subsp. doylei (strain ATCC BAA-1458 / RM4099 / 269.97).